The primary structure comprises 252 residues: 2-succinyl-6-hydroxy-2,4-cyclohexadiene-1-carboxylate synthase (252 aa).

The protein belongs to the AB hydrolase superfamily. MenH family. Monomer.

The enzyme catalyses 5-enolpyruvoyl-6-hydroxy-2-succinyl-cyclohex-3-ene-1-carboxylate = (1R,6R)-6-hydroxy-2-succinyl-cyclohexa-2,4-diene-1-carboxylate + pyruvate. The protein operates within quinol/quinone metabolism; 1,4-dihydroxy-2-naphthoate biosynthesis; 1,4-dihydroxy-2-naphthoate from chorismate: step 3/7. It participates in quinol/quinone metabolism; menaquinone biosynthesis. Its function is as follows. Catalyzes a proton abstraction reaction that results in 2,5-elimination of pyruvate from 2-succinyl-5-enolpyruvyl-6-hydroxy-3-cyclohexene-1-carboxylate (SEPHCHC) and the formation of 2-succinyl-6-hydroxy-2,4-cyclohexadiene-1-carboxylate (SHCHC). In Klebsiella pneumoniae subsp. pneumoniae (strain ATCC 700721 / MGH 78578), this protein is 2-succinyl-6-hydroxy-2,4-cyclohexadiene-1-carboxylate synthase.